Consider the following 38-residue polypeptide: RYGRSYAMSHMPMSRMGRKMYQNYMYRRMQATKMMQYH.

This sequence belongs to the turripeptide family. Expressed by the venom duct.

It localises to the secreted. The sequence is that of Turripeptide GpIAa from Cryptogemma periscelida (Atlantic gem-turris).